Consider the following 255-residue polypeptide: uncharacterized protein (255 aa).

The N-terminal stretch at 1–23 (MKRLNKLVLYISFLILVISFTAG) is a signal peptide. Cys24 is lipidated: N-palmitoyl cysteine. Residue Cys24 is the site of S-diacylglycerol cysteine attachment.

The protein belongs to the staphylococcal tandem lipoprotein family.

The protein resides in the cell membrane. This is an uncharacterized protein from Staphylococcus aureus (strain NCTC 8325 / PS 47).